The chain runs to 264 residues: Glutamate racemase (264 aa).

Substrate contacts are provided by residues 11–12 (DS) and 43–44 (YG). Cys-74 functions as the Proton donor/acceptor in the catalytic mechanism. 75–76 (NT) contacts substrate. Cys-193 functions as the Proton donor/acceptor in the catalytic mechanism. 194-195 (TH) contacts substrate.

This sequence belongs to the aspartate/glutamate racemases family.

It catalyses the reaction L-glutamate = D-glutamate. It participates in cell wall biogenesis; peptidoglycan biosynthesis. In terms of biological role, provides the (R)-glutamate required for cell wall biosynthesis. The polypeptide is Glutamate racemase (Bifidobacterium longum (strain DJO10A)).